Here is a 236-residue protein sequence, read N- to C-terminus: Purine nucleoside phosphorylase DeoD-type (236 aa).

His-5 lines the a purine D-ribonucleoside pocket. Residues Gly-21, Arg-25, Arg-44, and 88–91 (RVGT) contribute to the phosphate site. A purine D-ribonucleoside contacts are provided by residues 180–182 (EME) and 204–205 (SD). Asp-205 serves as the catalytic Proton donor.

The protein belongs to the PNP/UDP phosphorylase family. As to quaternary structure, homohexamer; trimer of homodimers.

The catalysed reaction is a purine D-ribonucleoside + phosphate = a purine nucleobase + alpha-D-ribose 1-phosphate. It carries out the reaction a purine 2'-deoxy-D-ribonucleoside + phosphate = a purine nucleobase + 2-deoxy-alpha-D-ribose 1-phosphate. Functionally, catalyzes the reversible phosphorolytic breakdown of the N-glycosidic bond in the beta-(deoxy)ribonucleoside molecules, with the formation of the corresponding free purine bases and pentose-1-phosphate. The protein is Purine nucleoside phosphorylase DeoD-type of Shewanella loihica (strain ATCC BAA-1088 / PV-4).